A 190-amino-acid chain; its full sequence is Glutathione peroxidase 2 (190 aa).

U40 is an active-site residue. U40 is a non-standard amino acid (selenocysteine).

The protein belongs to the glutathione peroxidase family. Homotetramer.

The protein localises to the cytoplasm. Its subcellular location is the cytosol. It catalyses the reaction 2 glutathione + H2O2 = glutathione disulfide + 2 H2O. The catalysed reaction is a hydroperoxy polyunsaturated fatty acid + 2 glutathione = a hydroxy polyunsaturated fatty acid + glutathione disulfide + H2O. The enzyme catalyses tert-butyl hydroperoxide + 2 glutathione = tert-butanol + glutathione disulfide + H2O. It carries out the reaction cumene hydroperoxide + 2 glutathione = 2-phenylpropan-2-ol + glutathione disulfide + H2O. It catalyses the reaction (13S)-hydroperoxy-(9Z,11E)-octadecadienoate + 2 glutathione = (13S)-hydroxy-(9Z,11E)-octadecadienoate + glutathione disulfide + H2O. The catalysed reaction is (5S)-hydroperoxy-(6E,8Z,11Z,14Z)-eicosatetraenoate + 2 glutathione = (5S)-hydroxy-(6E,8Z,11Z,14Z)-eicosatetraenoate + glutathione disulfide + H2O. The enzyme catalyses (12R)-hydroperoxy-(5Z,8Z,10E,14Z)-eicosatetraenoate + 2 glutathione = (12R)-hydroxy-(5Z,8Z,10E,14Z)-eicosatetraenoate + glutathione disulfide + H2O. It carries out the reaction (15S)-hydroperoxy-(5Z,8Z,11Z,13E)-eicosatetraenoate + 2 glutathione = (15S)-hydroxy-(5Z,8Z,11Z,13E)-eicosatetraenoate + glutathione disulfide + H2O. In terms of biological role, catalyzes the reduction of hydroperoxides in a glutathione-dependent manner thus regulating cellular redox homeostasis. Can reduce small soluble hydroperoxides such as H2O2, cumene hydroperoxide and tert-butyl hydroperoxide, as well as several fatty acid-derived hydroperoxides. Cannot reduce phosphatidycholine hydroperoxide. The polypeptide is Glutathione peroxidase 2 (GPX2) (Pongo pygmaeus (Bornean orangutan)).